The primary structure comprises 173 residues: Photosystem I assembly protein Ycf3 (173 aa).

3 TPR repeats span residues 35 to 68 (AYVY…ETDP), 72 to 105 (GETL…NPKQ), and 120 to 153 (GRIA…NPGG).

Belongs to the Ycf3 family.

The protein localises to the cellular thylakoid membrane. In terms of biological role, essential for the assembly of the photosystem I (PSI) complex. May act as a chaperone-like factor to guide the assembly of the PSI subunits. The protein is Photosystem I assembly protein Ycf3 of Synechococcus sp. (strain CC9902).